We begin with the raw amino-acid sequence, 402 residues long: UPF0261 protein y4oU (402 aa).

This sequence belongs to the UPF0261 family.

The polypeptide is UPF0261 protein y4oU (Sinorhizobium fredii (strain NBRC 101917 / NGR234)).